The primary structure comprises 429 residues: Arrestin-related trafficking adapter 10 (429 aa).

This sequence belongs to the ART10 family.

It localises to the cytoplasm. Its function is as follows. May regulate endocytosis by recruiting RSP5 ubiquitin ligase activity to specific plasma membrane proteins in response to extracellular stimuli. In Lachancea thermotolerans (strain ATCC 56472 / CBS 6340 / NRRL Y-8284) (Yeast), this protein is Arrestin-related trafficking adapter 10 (ART10).